We begin with the raw amino-acid sequence, 333 residues long: DNA-directed RNA polymerase subunit alpha (333 aa).

An alpha N-terminal domain (alpha-NTD) region spans residues 1-234; that stretch reads MQISVNEFLT…QQLAAFVDLK (234 aa). The tract at residues 248-333 is alpha C-terminal domain (alpha-CTD); the sequence is IDPILLRPVD…SLKKDDKATA (86 aa).

Belongs to the RNA polymerase alpha chain family. In terms of assembly, homodimer. The RNAP catalytic core consists of 2 alpha, 1 beta, 1 beta' and 1 omega subunit. When a sigma factor is associated with the core the holoenzyme is formed, which can initiate transcription.

It catalyses the reaction RNA(n) + a ribonucleoside 5'-triphosphate = RNA(n+1) + diphosphate. Functionally, DNA-dependent RNA polymerase catalyzes the transcription of DNA into RNA using the four ribonucleoside triphosphates as substrates. This Pseudomonas syringae pv. tomato (strain ATCC BAA-871 / DC3000) protein is DNA-directed RNA polymerase subunit alpha.